The sequence spans 115 residues: Large ribosomal subunit protein bL19 (115 aa).

The protein belongs to the bacterial ribosomal protein bL19 family.

In terms of biological role, this protein is located at the 30S-50S ribosomal subunit interface and may play a role in the structure and function of the aminoacyl-tRNA binding site. This chain is Large ribosomal subunit protein bL19, found in Clostridium tetani (strain Massachusetts / E88).